A 331-amino-acid polypeptide reads, in one-letter code: 6-phosphogluconolactonase (331 aa).

It belongs to the cycloisomerase 2 family.

It catalyses the reaction 6-phospho-D-glucono-1,5-lactone + H2O = 6-phospho-D-gluconate + H(+). It participates in carbohydrate degradation; pentose phosphate pathway; D-ribulose 5-phosphate from D-glucose 6-phosphate (oxidative stage): step 2/3. In terms of biological role, catalyzes the hydrolysis of 6-phosphogluconolactone to 6-phosphogluconate. The polypeptide is 6-phosphogluconolactonase (Salmonella gallinarum (strain 287/91 / NCTC 13346)).